Consider the following 389-residue polypeptide: Calreticulin (389 aa).

A signal peptide spans 1–13 (MFTLFLLIALSSA). The interval 12–189 (SAKVYFHETF…GVEKQEGKFD (178 aa)) is N-domain. Ca(2+) contacts are provided by Thr-20, Asn-52, and Asn-53. Cys-96 and Cys-130 are disulfide-bonded. An alpha-D-glucoside contacts are provided by Tyr-100, Lys-102, Tyr-121, and Asp-128. Repeat copies occupy residues 183 to 194 (KQEGKFDEDWDM), 202 to 213 (DPNVSKPADWVD), 219 to 230 (DPNDKKPEGWDD), 237 to 248 (DPNAKKPEEWND), 252 to 262 (GEWEAPTIENP), 266 to 276 (GEWKPKRIPNP), and 280 to 290 (GEWVHPQIANP). The 4 X approximate repeats stretch occupies residues 183 to 248 (KQEGKFDEDW…NAKKPEEWND (66 aa)). The interval 190–301 (EDWDMLAPKE…YVYDPELYKY (112 aa)) is P-domain. A compositionally biased stretch (basic and acidic residues) spans 213–232 (DEKEIDDPNDKKPEGWDDIP). Positions 213 to 256 (DEKEIDDPNDKKPEGWDDIPKTIVDPNAKKPEEWNDEDDGEWEA) are disordered. The segment at 252 to 290 (GEWEAPTIENPEYKGEWKPKRIPNPAYKGEWVHPQIANP) is 3 X approximate repeats. The segment at 302-389 (DSFAYIGIDV…IKKEENKEEL (88 aa)) is C-domain. Position 310 (Asp-310) interacts with an alpha-D-glucoside. Asp-321 provides a ligand contact to Ca(2+). Residues 329-388 (IEEAEKEAKVILERNAAEKKMRDEIKEAEKQKEEEAKKEAEKQKEEETKEEIKKEENKEE) adopt a coiled-coil conformation. The disordered stretch occupies residues 347 to 389 (KKMRDEIKEAEKQKEEEAKKEAEKQKEEETKEEIKKEENKEEL). A Prevents secretion from ER motif is present at residues 386–389 (KEEL).

It belongs to the calreticulin family. Interacts (via C-terminus) with host C1q.

The protein resides in the endoplasmic reticulum lumen. Its subcellular location is the cell projection. It is found in the uropodium. It localises to the cell surface. The protein localises to the phagocytic cup. In terms of biological role, molecular calcium-binding chaperone promoting folding, oligomeric assembly and quality control in the ER via the calreticulin/calnexin cycle. This lectin may interact transiently with almost all of the monoglucosylated glycoproteins that are synthesized in the ER. Plays a role in host cell phagocytosis, possibly by acting as a receptor for host C1q. Binding to C1q prevents the activation of the host classical complement pathway. Also, binds to apoptotic host cells independently of host C1q and collectins. The polypeptide is Calreticulin (Entamoeba histolytica (strain ATCC 30459 / HM-1:IMSS / ABRM)).